The chain runs to 447 residues: GTPase Der (447 aa).

2 consecutive EngA-type G domains span residues 3–167 (PVIA…HLAD) and 180–353 (IRLA…ASAN). GTP is bound by residues 9 to 16 (GRPNVGKS), 56 to 60 (DTGGF), 119 to 122 (NKAE), 186 to 193 (GRPNVGKS), 233 to 237 (DTAGL), and 298 to 301 (NKWD). Residues 354 to 438 (RKMSTPVLTR…PMRIQMKSSH (85 aa)) form the KH-like domain.

It belongs to the TRAFAC class TrmE-Era-EngA-EngB-Septin-like GTPase superfamily. EngA (Der) GTPase family. In terms of assembly, associates with the 50S ribosomal subunit.

Its function is as follows. GTPase that plays an essential role in the late steps of ribosome biogenesis. This chain is GTPase Der, found in Polaromonas sp. (strain JS666 / ATCC BAA-500).